The following is a 263-amino-acid chain: Chymotrypsinogen B (263 aa).

The first 18 residues, 1–18 (MAFLWLVSCFALVGATFG), serve as a signal peptide directing secretion. Cystine bridges form between Cys19/Cys140, Cys60/Cys76, Cys154/Cys219, Cys186/Cys200, and Cys209/Cys238. The 228-residue stretch at 34–261 (IVNGEDAIPG…LMPWVQEILE (228 aa)) folds into the Peptidase S1 domain. His75 functions as the Charge relay system in the catalytic mechanism. Ser93 is modified (phosphoserine). The Charge relay system role is filled by Asp120. Ser213 (charge relay system) is an active-site residue.

It belongs to the peptidase S1 family.

Its subcellular location is the secreted. It is found in the extracellular space. The catalysed reaction is Preferential cleavage: Tyr-|-Xaa, Trp-|-Xaa, Phe-|-Xaa, Leu-|-Xaa.. This Mus musculus (Mouse) protein is Chymotrypsinogen B (Ctrb1).